We begin with the raw amino-acid sequence, 2845 residues long: MALGKVLAMALVLALAVLGSLSPGARAGDCKGQRQVLREAPGFVTDGAGNYSVNGNCEWLIEAPSPQHRILLDFLFLDTECTYDYLFVYDGDSPRGPLLASLSGSTRPPPIEASSGKMLLHLFSDANYNLLGFNASFRFSLCPGGCQSHGQCQPPGVCACEPGWGGPDCGLQECSAYCGSHGTCASPLGPCRCEPGFLGRACDLHLWENQGAGWWHNVSARDPAFSARIGAAGAFLSPPGLLAVFGGQDLNNALGDLVLYNFSANTWESWDLSPAPAARHSHVAVAWAGSLVLMGGELADGSLTNDVWAFSPLGRGHWELLAPPASSSSGPPGLAGHAAALVDDVWLYVSGGRTPHDLFSSGLFRFRLDSTSGGYWEQVIPAGGRPPAATGHSMVFHAPSRALLVHGGHRPSTARFSVRVNSTELFHVDRHVWTTLKGRDGLQGPRERAFHTASVLGNYMVVYGGNVHTHYQEEKCYEDGIFFYHLGCHQWVSGAELAPPGTPEGRAAPPSGRYSHVAAVLGGSVLLVAGGYSGRPRGDLMAYKVPPFVFQAPAPDYHLDYCSMYTDHSVCSRDPECSWCQGACQAAPPPGTPLGACPAASCLGLGRLLGDCQACLAFSSPTAPPRGPGTLGWCVHNESCLPRPEQARCRGEQISGTVGWWGPAPVFVTSLEACVTQSFLPGLHLLTFQQPPNTSQPDKVSIVRSTTITLTPSAETDVSLVYRGFIYPMLPGGPGGPGAEDVAVWTRAQRLHVLARMARGPDTENMEEVGRWVAHQEKETRRLQRPGSARLFPLPGRDHKYAVEIQGQLNGSAGPGHSELTLLWDRTGVPGGSEISFFFLEPYRSSSCTSYSSCLGCLADQGCGWCLTSATCHLRQGGAHCGDDGAGGSLLVLVPTLCPLCEEHRDCHACTQDPFCEWHQSTSRKGDAACSRRGRGRGALKSPEECPPLCSQRLTCEDCLANSSQCAWCQSTHTCFLFAAYLARYPHGGCRGWDDSVHSEPRCRSCDGFLTCHECLQSHECGWCGNEDNPTLGRCLQGDFSGPLGGGNCSLWVGEGLGLPVALPARWAYARCPDVDECRLGLARCHPRATCLNTPLSYECHCQRGYQGDGISHCNRTCLEDCGHGVCSGPPDFTCVCDLGWTSDLPPPTPAPGPPAPRCSRDCGCSFHSHCRKRGPGFCDECQDWTWGEHCERCRPGSFGNATGSRGCRPCQCNGHGDPRRGHCDNLSGLCFCQDHTEGAHCQLCSPGYYGDPRAGGSCFRECGGRALLTNVSSVALGSRRVGGLLPPGGGAARAGPGLSYCVWVVSATEELQPCAPGTLCPPLTLTFSPDSSTPCTLSYVLAFDGFPRFLDTGVVQSDRSLIAAFCGQRRDRPLTVQALSGLLVLHWEANGSSSWGFNASVGSARCGSGGPGSCPVPQECVPQDGAAGAGLCRCPQGWAGPHCRMALCPENCNAHTGAGTCNQSLGVCICAEGFGGPDCATKLDGGQLVWETLMDSRLSADTASRFLHRLGHTMVDGPDATLWMFGGLGLPQGLLGNLYRYSVSERRWTQMLAGAEDGGPGPSPRSFHAAAYVPAGRGAMYLLGGLTAGGVTRDFWVLNLTTLQWRQEKAPQTVELPAVAGHTLTARRGLSLLLVGGYSPENGFNQQLLEYQLATGTWVSGAQSGTPPTGLYGHSAVYHEATDSLYVFGGFRFHVELAAPSPELYSLHCPDRTWSLLAPSQGAKRDRMRNVRGSSRGLGQVPGEQPGSWGFREVRKKMALWAALAGTGGFLEEISPHLKEPRPRLFHASALLGDTMVVLGGRSDPDEFSSDVLLYQVNCNAWLLPDLTRSASVGPPMEESVAHAVAAVGSRLYISGGFGGVALGRLLALTLPPDPCRLLSSPEACNQSGACTWCHGACLSGDQAHRLGCGGSPCSPMPRSPEECRRLRTCSECLARHPRTLQPGDGEASTPRCKWCTNCPEGACIGRNGSCTSENDCRINQREVFWAGNCSEAACGAADCEQCTREGKCMWTRQFKRTGETRRILSVQPTYDWTCFSHSLLNVSPMPVESSPPLPCPTPCHLLPNCTSCLDSKGADGGWQHCVWSSSLQQCLSPSYLPLRCMAGGCGRLLRGPESCSLGCAQATQCALCLRRPHCGWCAWGGQDGGGRCMEGGLSGPRDGLTCGRPGASWAFLSCPPEDECANGHHDCNETQNCHDQPHGYECSCKTGYTMDNMTGLCRPVCAQGCVNGSCVEPDHCRCHFGFVGRNCSTECRCNRHSECAGVGARDHCLLCRNHTKGSHCEQCLPLFVGSAVGGGTCRPCHAFCRGNSHICISRKELQMSKGEPKKYSLDPEEIENWVTEGPSEDEAVCVNCQNNSYGEKCESCLQGYFLLDGKCTKCQCNGHADTCNEQDGTGCPCQNNTETGTCQGSSPSDRRDCYKYQCAKCRESFHGSPLGGQQCYRLISVEQECCLDPTSQTNCFHEPKRRALGPGRTVLFGVQPKFTNVDIRLTLDVTFGAVDLYVSTSYDTFVVRVAPDTGVHTVHIQPPPAPPPPPPPADGGPRGAGDPGGAGASSGPGAPAEPRVREVWPRGLITYVTVTEPSAVLVVRGVRDRLVITYPHEHHALKSSRFYLLLLGVGDPSGPGANGSADSQGLLFFRQDQAHIDLFVFFSVFFSCFFLFLSLCVLLWKAKQALDQRQEQRRHLQEMTKMASRPFAKVTVCFPPDPTAPASAWKPAGLPPPAFRRSEPFLAPLLLTGAGGPWGPMGGGCCPPAIPATTAGLRAGPITLEPTEDGMAGVATLLLQLPGGPHAPNGACLGSALVTLRHRLHEYCGGGGGAGGSGHGTGAGRKGLLSQDNLTSMSL.

The first 27 residues, 1–27 (MALGKVLAMALVLALAVLGSLSPGARA), serve as a signal peptide directing secretion. Residues 28-2647 (GDCKGQRQVL…FFRQDQAHID (2620 aa)) are Extracellular-facing. Cystine bridges form between C30–C57, C142–C152, C146–C158, C174–C184, C178–C191, and C193–C202. The CUB 1 domain occupies 30-140 (CKGQRQVLRE…LGFNASFRFS (111 aa)). Residue N50 is glycosylated (N-linked (GlcNAc...) asparagine). EGF-like domains are found at residues 138-168 (RFSL…GGPD) and 170-203 (GLQE…RACD). N217 carries N-linked (GlcNAc...) asparagine glycosylation. Kelch repeat units follow at residues 241-287 (LLAV…AVAW), 290-338 (SLVL…AGHA), 346-399 (WLYV…FHAP), 402-453 (ALLV…FHTA), 459-511 (YMVV…APPS), and 525-575 (VLLV…SRDP). PSI domains lie at 561–613 (YCSM…GDCQ), 847–899 (SCTS…TLCP), and 900–947 (LCEE…EECP). N1048 carries N-linked (GlcNAc...) asparagine glycosylation. The EGF-like 3; calcium-binding domain maps to 1074–1115 (DVDECRLGLARCHPRATCLNTPLSYECHCQRGYQGDGISHCN). Disulfide bonds link C1078-C1091, C1085-C1100, C1102-C1114, C1163-C1171, C1165-C1179, C1182-C1191, C1194-C1208, C1211-C1224, C1213-C1231, C1233-C1242, C1245-C1259, C1263-C1302, C1336-C1367, C1407-C1421, C1415-C1433, and C1435-C1444. Laminin EGF-like domains are found at residues 1163–1210 (CGCS…GCRP) and 1211–1261 (CQCN…SCFR). The region spanning 1263–1405 (CGGRALLTNV…WGFNASVGSA (143 aa)) is the CUB 2 domain. N1271 carries an N-linked (GlcNAc...) asparagine glycan. T1353 is subject to Phosphothreonine. One can recognise an EGF-like 4 domain in the interval 1403–1445 (GSARCGSGGPGSCPVPQECVPQDGAAGAGLCRCPQGWAGPHCR). Kelch repeat units lie at residues 1522–1570 (TLWM…SFHA), 1580–1626 (AMYL…HTLT), 1632–1679 (SLLL…SAVY), 1685–1735 (SLYV…VRGS), 1796–1843 (TMVV…ESVA), and 1852–1898 (RLYI…CHGA). A disordered region spans residues 1726–1745 (RDRMRNVRGSSRGLGQVPGE). PSI domains lie at 1876 to 1916 (PCRL…SPCS), 1924 to 1979 (ECRR…NDCR), 2060 to 2118 (PCHL…ESCS), and 2120 to 2177 (GCAQ…LSCP). N2066 is a glycosylation site (N-linked (GlcNAc...) asparagine). The EGF-like 5 domain occupies 2178-2216 (PEDECANGHHDCNETQNCHDQPHGYECSCKTGYTMDNMT). Disulfide bonds link C2182–C2195 and C2189–C2204. An N-linked (GlcNAc...) asparagine glycan is attached at N2229. 8 disulfide bridges follow: C2253–C2261, C2255–C2270, C2273–C2282, C2285–C2299, C2380–C2389, C2382–C2397, C2399–C2424, and C2427–C2441. Laminin EGF-like domains lie at 2253 to 2301 (CRCN…TCRP) and 2380 to 2443 (CQCN…QCYR). Positions 2523–2564 (TVHIQPPPAPPPPPPPADGGPRGAGDPGGAGASSGPGAPAEP) are disordered. Over residues 2527–2540 (QPPPAPPPPPPPAD) the composition is skewed to pro residues. A compositionally biased stretch (gly residues) spans 2542–2556 (GPRGAGDPGGAGASS). A helical transmembrane segment spans residues 2648 to 2668 (LFVFFSVFFSCFFLFLSLCVL). Over 2669–2845 (LWKAKQALDQ…SQDNLTSMSL (177 aa)) the chain is Cytoplasmic. Gly residues predominate over residues 2817–2831 (GGGAGGSGHGTGAGR). Positions 2817–2845 (GGGAGGSGHGTGAGRKGLLSQDNLTSMSL) are disordered. Residues 2836 to 2845 (SQDNLTSMSL) show a composition bias toward polar residues.

It localises to the membrane. Its function is as follows. Acts as a negative regulator of hedgehog signaling. The polypeptide is Multiple epidermal growth factor-like domains protein 8 (MEGF8) (Homo sapiens (Human)).